Consider the following 339-residue polypeptide: Ribonucleoside-diphosphate reductase subunit beta (339 aa).

Fe cation-binding residues include Asp87 and His121. Residue Tyr125 is part of the active site. His215 is a binding site for Fe cation.

This sequence belongs to the ribonucleoside diphosphate reductase small chain family. Tetramer of two alpha and two beta subunits. Requires Fe cation as cofactor.

It carries out the reaction a 2'-deoxyribonucleoside 5'-diphosphate + [thioredoxin]-disulfide + H2O = a ribonucleoside 5'-diphosphate + [thioredoxin]-dithiol. Its function is as follows. Provides the precursors necessary for DNA synthesis. Catalyzes the biosynthesis of deoxyribonucleotides from the corresponding ribonucleotides. This Mycoplasmoides gallisepticum (strain R(low / passage 15 / clone 2)) (Mycoplasma gallisepticum) protein is Ribonucleoside-diphosphate reductase subunit beta (nrdF).